The primary structure comprises 196 residues: SAGA-associated factor 11 homolog (196 aa).

Residues 1–22 (MSAANMPTTTGAQGSGNQVPTT) form a disordered region. Residues 106 to 127 (CTCPNCDRLVAAARFAPHLEKC) form an SGF11-type zinc finger. A disordered region spans residues 144–196 (TKEGATSAHLHSAGNTGGTDDEDDVDWSSDKRRKKSNQNSRNNGSKKNNGKSF). A Phosphoserine modification is found at Ser172. Residues 180-196 (NQNSRNNGSKKNNGKSF) are compositionally biased toward low complexity.

The protein belongs to the SGF11 family. In terms of assembly, component of some SAGA transcription coactivator-HAT complexes, at least composed of Ada2b, not/nonstop, Pcaf/Gcn5, Sgf11 and Spt3. Within the SAGA complex, Sgf11, e(y)2, and not/nonstop form an additional subcomplex of SAGA called the DUB module (deubiquitination module). Interacts directly with not/nonstop. Interacts with the AMEX complex component xmas-2. Interacts with Cbp80; important for promoter recruitment of Sgf11 that is not associated with the DUB module.

Its subcellular location is the nucleus. It is found in the nucleoplasm. The protein resides in the cytoplasm. In terms of biological role, component of the transcription regulatory histone acetylation (HAT) complex SAGA, a multiprotein complex that activates transcription by remodeling chromatin and mediating histone acetylation and deubiquitination. Within the SAGA complex, participates in a subcomplex that specifically deubiquitinates histone H2B. The SAGA complex is recruited to specific gene promoters by activators, where it is required for transcription. Required for nuclear receptor-mediated transactivation. Binds independently on SAGA to promoters in an RNA-dependent manner. Binds to mRNA and is essential for total mRNA export from the nucleus. Required to counteract heterochromatin silencing. Controls the development of neuronal connectivity in visual system by being required for accurate axon targeting in the optic lobe. Required for expression of ecdysone-induced genes such as br/broad. This chain is SAGA-associated factor 11 homolog, found in Drosophila erecta (Fruit fly).